The following is a 343-amino-acid chain: Putative ALA-interacting subunit 2 (343 aa).

A helical transmembrane segment spans residues Pro-43–Ile-63. Asn-103, Asn-178, Asn-191, and Asn-218 each carry an N-linked (GlcNAc...) asparagine glycan. Residues Phe-301 to Met-321 form a helical membrane-spanning segment.

It belongs to the CDC50/LEM3 family. As to expression, expressed in roots, leaves, stems, flowers and siliques.

Its subcellular location is the membrane. In Arabidopsis thaliana (Mouse-ear cress), this protein is Putative ALA-interacting subunit 2 (ALIS2).